The sequence spans 518 residues: Chromosomal replication initiator protein DnaA (518 aa).

A domain I, interacts with DnaA modulators region spans residues 1–72; that stretch reads MTLAEFWPLC…VREELAAGRS (72 aa). The interval 72–180 is domain II; the sequence is SAFVFKPGEG…DAEEARYEQT (109 aa). The interval 145-178 is disordered; sequence EPRQAAGSASRPESAAVAKARTDAQRDAEEARYE. Positions 164–177 are enriched in basic and acidic residues; it reads ARTDAQRDAEEARY. The interval 181 to 397 is domain III, AAA+ region; sequence NLSPDYTFDT…GAFNRVGASS (217 aa). The ATP site is built by glycine 225, glycine 227, lysine 228, and threonine 229. Positions 398-518 are domain IV, binds dsDNA; that stretch reads RFMNRPVIDI…YEKLLILIQN (121 aa).

It belongs to the DnaA family. As to quaternary structure, oligomerizes as a right-handed, spiral filament on DNA at oriC.

It is found in the cytoplasm. Its function is as follows. Plays an essential role in the initiation and regulation of chromosomal replication. ATP-DnaA binds to the origin of replication (oriC) to initiate formation of the DNA replication initiation complex once per cell cycle. Binds the DnaA box (a 9 base pair repeat at the origin) and separates the double-stranded (ds)DNA. Forms a right-handed helical filament on oriC DNA; dsDNA binds to the exterior of the filament while single-stranded (ss)DNA is stabiized in the filament's interior. The ATP-DnaA-oriC complex binds and stabilizes one strand of the AT-rich DNA unwinding element (DUE), permitting loading of DNA polymerase. After initiation quickly degrades to an ADP-DnaA complex that is not apt for DNA replication. Binds acidic phospholipids. The protein is Chromosomal replication initiator protein DnaA of Neisseria meningitidis serogroup A / serotype 4A (strain DSM 15465 / Z2491).